Reading from the N-terminus, the 560-residue chain is Formate--tetrahydrofolate ligase (560 aa).

69-76 contributes to the ATP binding site; that stretch reads TPAGEGKS.

Belongs to the formate--tetrahydrofolate ligase family.

The enzyme catalyses (6S)-5,6,7,8-tetrahydrofolate + formate + ATP = (6R)-10-formyltetrahydrofolate + ADP + phosphate. The protein operates within one-carbon metabolism; tetrahydrofolate interconversion. This chain is Formate--tetrahydrofolate ligase, found in Listeria monocytogenes serovar 1/2a (strain ATCC BAA-679 / EGD-e).